The sequence spans 309 residues: MNSPDIALIKTYLLTLQDNICAALAQADGHAEFTEECWVREEGGGGRSRVLVNGAVFEQAGVNFSHVSGAMLPASATAHRPELAGRSFQALGVSLVIHPLNPYLPTSHANVRFFIAEKPGEDAVWWFGGGFDLTPYYGFEEDAIHWHQVAHSLCQPFGEQIYPRYKKWCDDYFYIKHRQEARGIGGLFFDDLNSPDFMTCFNFTQAVGDGFLAAYMPIVARRKALGWGDRERQFQLYRRGRYVEFNLVWDRGTLFGLQTGGRTESILMSLPPLVRWEYNYQPEADSAEAALYRDFLPVKDWLAIKGETH.

Residue S94 coordinates substrate. The a divalent metal cation site is built by H98 and H108. Residue H108 is the Proton donor of the active site. A substrate-binding site is contributed by N110–R112. A divalent metal cation is bound by residues H147 and H177. The tract at residues Y242 to E277 is important for dimerization. G260–R262 serves as a coordination point for substrate.

The protein belongs to the aerobic coproporphyrinogen-III oxidase family. In terms of assembly, homodimer. The cofactor is a divalent metal cation.

It is found in the cytoplasm. It carries out the reaction coproporphyrinogen III + O2 + 2 H(+) = protoporphyrinogen IX + 2 CO2 + 2 H2O. It functions in the pathway porphyrin-containing compound metabolism; protoporphyrin-IX biosynthesis; protoporphyrinogen-IX from coproporphyrinogen-III (O2 route): step 1/1. In terms of biological role, involved in the heme biosynthesis. Catalyzes the aerobic oxidative decarboxylation of propionate groups of rings A and B of coproporphyrinogen-III to yield the vinyl groups in protoporphyrinogen-IX. The protein is Oxygen-dependent coproporphyrinogen-III oxidase of Yersinia pestis bv. Antiqua (strain Antiqua).